Reading from the N-terminus, the 477-residue chain is Ribulose bisphosphate carboxylase large chain (477 aa).

Residues 1–2 (MS) constitute a propeptide that is removed on maturation. P3 is subject to N-acetylproline. K14 carries the N6,N6,N6-trimethyllysine modification. Substrate is bound by residues N123 and T173. The Proton acceptor role is filled by K175. Residue K177 participates in substrate binding. Mg(2+) is bound by residues K201, D203, and E204. At K201 the chain carries N6-carboxylysine. The Proton acceptor role is filled by H294. Residues R295, H327, and S379 each contribute to the substrate site.

This sequence belongs to the RuBisCO large chain family. Type I subfamily. Heterohexadecamer of 8 large chains and 8 small chains; disulfide-linked. The disulfide link is formed within the large subunit homodimers. The cofactor is Mg(2+). Post-translationally, the disulfide bond which can form in the large chain dimeric partners within the hexadecamer appears to be associated with oxidative stress and protein turnover.

It localises to the plastid. It is found in the chloroplast. The catalysed reaction is 2 (2R)-3-phosphoglycerate + 2 H(+) = D-ribulose 1,5-bisphosphate + CO2 + H2O. The enzyme catalyses D-ribulose 1,5-bisphosphate + O2 = 2-phosphoglycolate + (2R)-3-phosphoglycerate + 2 H(+). Its function is as follows. RuBisCO catalyzes two reactions: the carboxylation of D-ribulose 1,5-bisphosphate, the primary event in carbon dioxide fixation, as well as the oxidative fragmentation of the pentose substrate in the photorespiration process. Both reactions occur simultaneously and in competition at the same active site. In Solanum lycopersicum (Tomato), this protein is Ribulose bisphosphate carboxylase large chain (rbcL).